A 318-amino-acid polypeptide reads, in one-letter code: MFMINVLLLIVPILLAVAFLTLVERKVLGYMQLRKGPNIVGPYGLLQPIADALKLFIKEPLQPLTSSTSMFIIAPILALTLALTMWIPLPMPYPLINMNLGILFMLAMSSLAVYSILWSGWASNSKYALIGALRAVAQTISYEVTLAIILLSVLLMSGSFTLSTLIITQEYLWLIFPSWPLAMMWFISTLAETNRAPFDLTEGESELVSGFNVEYAAGPFALFFLAEYANIIMMNIFTTTLFLGAFHNPYLPELYSINFTIKALLLTCSFLWIRASYPRFRYDQLMHLLWKNFLPLTLALCMWHVSLPIMLSSIPPQT.

The next 8 helical transmembrane spans lie at 2–22, 70–90, 100–120, 147–167, 171–191, 217–237, 253–273, and 294–314; these read FMIN…FLTL, MFII…IPLP, LGIL…LWSG, AIIL…TLII, YLWL…STLA, AGPF…MNIF, ELYS…FLWI, and LPLT…LSSI.

This sequence belongs to the complex I subunit 1 family. As to quaternary structure, core subunit of respiratory chain NADH dehydrogenase (Complex I) which is composed of 45 different subunits.

The protein resides in the mitochondrion inner membrane. The enzyme catalyses a ubiquinone + NADH + 5 H(+)(in) = a ubiquinol + NAD(+) + 4 H(+)(out). Its function is as follows. Core subunit of the mitochondrial membrane respiratory chain NADH dehydrogenase (Complex I) which catalyzes electron transfer from NADH through the respiratory chain, using ubiquinone as an electron acceptor. Essential for the catalytic activity and assembly of complex I. In Equus caballus (Horse), this protein is NADH-ubiquinone oxidoreductase chain 1 (MT-ND1).